The sequence spans 149 residues: Large ribosomal subunit protein bL9 (149 aa).

The protein belongs to the bacterial ribosomal protein bL9 family.

Its function is as follows. Binds to the 23S rRNA. The polypeptide is Large ribosomal subunit protein bL9 (Thermotoga sp. (strain RQ2)).